Here is a 248-residue protein sequence, read N- to C-terminus: Coenzyme F420:L-glutamate ligase (248 aa).

GTP is bound by residues 15–18, 45–46, and lysine 50; these read IPLI and ET. Residue aspartate 115 participates in a divalent metal cation binding. Residue asparagine 118 coordinates GTP. A divalent metal cation contacts are provided by aspartate 155, serine 156, and glutamine 213. 211–218 serves as a coordination point for GTP; the sequence is MGQSNEGI.

This sequence belongs to the CofE family. In terms of assembly, homodimer. It depends on Mg(2+) as a cofactor. Mn(2+) serves as cofactor. K(+) is required as a cofactor.

The enzyme catalyses oxidized coenzyme F420-0 + GTP + L-glutamate = oxidized coenzyme F420-1 + GDP + phosphate + H(+). The catalysed reaction is oxidized coenzyme F420-1 + GTP + L-glutamate = oxidized coenzyme F420-2 + GDP + phosphate + H(+). It functions in the pathway cofactor biosynthesis; coenzyme F420 biosynthesis. In terms of biological role, catalyzes the GTP-dependent successive addition of two or more gamma-linked L-glutamates to the L-lactyl phosphodiester of 7,8-didemethyl-8-hydroxy-5-deazariboflavin (F420-0) to form coenzyme F420-0-glutamyl-glutamate (F420-2) or polyglutamated F420 derivatives. This Methanococcus maripaludis (strain DSM 14266 / JCM 13030 / NBRC 101832 / S2 / LL) protein is Coenzyme F420:L-glutamate ligase.